The primary structure comprises 177 residues: MASSSLLVTIFLCISVFFFSSVNANEVTVGGKSGDWKIPPSSSFSFNEWAQKARFKVGDFIVFKYEAGKDSVLQVTREAYEKCNTTSPKASYTDGNTKVKLDQAGPVYFVSGTEGHCQKGQKLRLVVITPRNSAFSPGPSPSEFDGPAVAPTSGAAKLAGGFSVVFGLVLGLWAFFF.

A signal peptide spans 1-24; it reads MASSSLLVTIFLCISVFFFSSVNA. A Phytocyanin domain is found at 25–129; it reads NEVTVGGKSG…GQKLRLVVIT (105 aa). C83 and C117 are joined by a disulfide. N84 is a glycosylation site (N-linked (GlcNAc...) asparagine). Residue S153 is the site of GPI-anchor amidated serine attachment. Positions 154-177 are cleaved as a propeptide — removed in mature form; sequence GAAKLAGGFSVVFGLVLGLWAFFF.

It belongs to the early nodulin-like (ENODL) family. As to expression, mostly expressed in seedlings, siliques and flowers, and, to a lower extent, in roots, stems and seeds, but barely in leaves.

The protein resides in the cell membrane. Its function is as follows. May act as a carbohydrate transporter. Required, together with ENODL11, ENODL12, ENODL13, ENODL14 and ENODL15, for male-female communication and pollen tube reception and burst at the synergid cell surface of the female gametophyte. In Arabidopsis thaliana (Mouse-ear cress), this protein is Early nodulin-like protein 15.